Reading from the N-terminus, the 282-residue chain is Putative 4-diphosphocytidyl-2-C-methyl-D-erythritol kinase (282 aa).

The active site involves K10. Position 94–104 (94–104) interacts with ATP; that stretch reads PICAGLGGGSS. Residue D136 is part of the active site.

Belongs to the GHMP kinase family. IspE subfamily.

The catalysed reaction is 4-CDP-2-C-methyl-D-erythritol + ATP = 4-CDP-2-C-methyl-D-erythritol 2-phosphate + ADP + H(+). Functionally, catalyzes the phosphorylation of the position 2 hydroxy group of 4-diphosphocytidyl-2C-methyl-D-erythritol. In Streptococcus mutans serotype c (strain ATCC 700610 / UA159), this protein is Putative 4-diphosphocytidyl-2-C-methyl-D-erythritol kinase (ipk).